The sequence spans 247 residues: Acetoacetate decarboxylase (247 aa).

The active-site Schiff-base intermediate with acetoacetate is Lys116.

Belongs to the ADC family.

The enzyme catalyses acetoacetate + H(+) = acetone + CO2. Catalyzes the conversion of acetoacetate to acetone and carbon dioxide. The protein is Acetoacetate decarboxylase of Ralstonia nicotianae (strain ATCC BAA-1114 / GMI1000) (Ralstonia solanacearum).